A 1007-amino-acid polypeptide reads, in one-letter code: Zinc finger CCCH domain-containing protein 4 (1007 aa).

In terms of domain architecture, Helicase ATP-binding spans 28–192; that stretch reads VEKVKGNRVT…FRDLGRGERV (165 aa). Residue 41-48 coordinates ATP; that stretch reads GDTGCGKS. The short motif at 139–142 is the DEAH box element; the sequence is DEIH. Positions 250–420 constitute a Helicase C-terminal domain; sequence LIHRLLLHIH…EQVLMICCAE (171 aa). 2 C3H1-type zinc fingers span residues 723–750 and 751–778; these read ALEN…HSSR and APRP…HDSG.

This chain is Zinc finger CCCH domain-containing protein 4, found in Oryza sativa subsp. japonica (Rice).